Reading from the N-terminus, the 117-residue chain is ORF2 protein (117 aa).

The interval 43-104 (NLGRPPAPQP…AGDGGDGELA (62 aa)) is disordered. Positions 79–98 (GTGGDAAGGEAGGSRGAGDG) are enriched in gly residues.

The chain is ORF2 protein from Homo sapiens (Human).